The following is a 353-amino-acid chain: Lipase chaperone (353 aa).

Residues 12–32 (IVLYLILGCVVVCGVWYSFDV) traverse the membrane as a helical segment.

This sequence belongs to the lipase chaperone family.

Its subcellular location is the cell inner membrane. Functionally, may be involved in the folding of the extracellular lipase during its passage through the periplasm. The chain is Lipase chaperone from Xylella fastidiosa (strain M23).